Reading from the N-terminus, the 413-residue chain is Probable inactive allantoicase (413 aa).

The protein belongs to the allantoicase family.

The function of this enzyme is unclear as allantoicase activity is not known to exist in mammals. The protein is Probable inactive allantoicase of Rattus norvegicus (Rat).